The primary structure comprises 317 residues: Protease 7 (317 aa).

An N-terminal signal peptide occupies residues 1–20 (MRAKLLGIVLTTPIAISSFA). Topologically, residues 21 to 31 (STETLSFTPDN) are periplasmic. The beta stranded transmembrane segment at 32–41 (INADISLGTL) threads the bilayer. Residues 42–69 (SGKTKERVYLAEEGGRKVSQLDWKFNNA) lie on the Extracellular side of the membrane. Residues 70-78 (AIIKGAINW) form a beta stranded membrane-spanning segment. The Periplasmic portion of the chain corresponds to 79–83 (DLMPQ). Residues 84–92 (ISIGAAGWT) traverse the membrane as a beta stranded segment. At 93–130 (TLGSRGGNMVDQDWMDSSNPGTWTDESRHPDTQLNYAN) the chain is on the extracellular side. Active-site residues include Asp103 and Asp105. Residues 131–140 (EFDLNIKGWL) form a beta stranded membrane-spanning segment. The Periplasmic segment spans residues 141–145 (LNEPN). Residues 146-156 (YRLGLMAGYQE) traverse the membrane as a beta stranded segment. At 157–197 (SRYSFTARGGSYIYSSEEGFRDDIGSFPNGERAIGYKQRFK) the chain is on the extracellular side. Residues 198 to 209 (MPYIGLTGSYRY) traverse the membrane as a beta stranded segment. At 210-211 (ED) the chain is on the periplasmic side. The chain crosses the membrane as a beta stranded span at residues 212–221 (FELGGTFKYS). The Extracellular portion of the chain corresponds to 222-250 (GWVESSDNDEHYDPGKRITYRSKVKDQNY). Active-site residues include Asp230 and His232. Residues 251-261 (YSVAVNAGYYV) form a beta stranded membrane-spanning segment. Topologically, residues 262–264 (TPN) are periplasmic. A beta stranded membrane pass occupies residues 265–274 (AKVYVEGAWN). Topologically, residues 275–306 (RVTNKKGNTSLYDHNNNTSDYSKNGAGIENYN) are extracellular. Residues 307–316 (FITTAGLKYT) form a beta stranded membrane-spanning segment. Position 317 (Phe317) is a topological domain, periplasmic.

It belongs to the peptidase A26 family. Homopentamer.

The protein localises to the cell outer membrane. The enzyme catalyses Has a virtual requirement for Arg in the P1 position and a slightly less stringent preference for this residue in the P1' position, which can also contain Lys, Gly or Val.. With respect to regulation, inhibited by zinc. Its function is as follows. Protease that can cleave T7 RNA polymerase, ferric enterobactin receptor protein (FEP), antimicrobial peptide protamine and other proteins. This protease has a specificity for paired basic residues. This Escherichia coli (strain K12) protein is Protease 7 (ompT).